A 400-amino-acid chain; its full sequence is Methylthioribose kinase (400 aa).

ATP is bound by residues N40, K57, and 111–113 (EDL). Residue D229 participates in substrate binding. 246–248 (DAE) is an ATP binding site. R344 contributes to the substrate binding site.

The protein belongs to the methylthioribose kinase family. As to quaternary structure, homodimer.

The enzyme catalyses 5-(methylsulfanyl)-D-ribose + ATP = 5-(methylsulfanyl)-alpha-D-ribose 1-phosphate + ADP + H(+). It participates in amino-acid biosynthesis; L-methionine biosynthesis via salvage pathway; S-methyl-5-thio-alpha-D-ribose 1-phosphate from S-methyl-5'-thioadenosine (hydrolase route): step 2/2. Functionally, catalyzes the phosphorylation of methylthioribose into methylthioribose-1-phosphate. The chain is Methylthioribose kinase from Pectobacterium atrosepticum (strain SCRI 1043 / ATCC BAA-672) (Erwinia carotovora subsp. atroseptica).